The chain runs to 122 residues: Large ribosomal subunit protein uL14 (122 aa).

Belongs to the universal ribosomal protein uL14 family. Part of the 50S ribosomal subunit. Forms a cluster with proteins L3 and L19. In the 70S ribosome, L14 and L19 interact and together make contacts with the 16S rRNA in bridges B5 and B8.

Binds to 23S rRNA. Forms part of two intersubunit bridges in the 70S ribosome. The sequence is that of Large ribosomal subunit protein uL14 from Halothermothrix orenii (strain H 168 / OCM 544 / DSM 9562).